Here is a 303-residue protein sequence, read N- to C-terminus: Mitochondrial substrate carrier family protein E (303 aa).

The Mitochondrial intermembrane portion of the chain corresponds to 1–8 (MENKKESS). Solcar repeat units lie at residues 6–93 (ESSL…SKQW), 104–197 (ESTI…CKST), and 210–298 (LPIP…LKYL). A helical transmembrane segment spans residues 9 to 29 (LLYILTGATSGLLADSIMHPV). Over 30 to 67 (DTVRARVQIEKVGKSQYKGTFNALNQIIKNEGVSYLYK) the chain is Mitochondrial matrix. A helical membrane pass occupies residues 68 to 88 (GFPIVATATVPAHALYFLGYE). At 89–109 (YSKQWVTDRYGKKWGESTITH) the chain is on the mitochondrial intermembrane side. A helical transmembrane segment spans residues 110–130 (FSAGFVADALGSLIWVPMDII). At 131 to 171 (KQRLQVQTNTQKLNPNQTYYKGSFHAGKIILQEEGIRGLYR) the chain is on the mitochondrial matrix side. The helical transmembrane segment at 172–192 (GFMPALATYGPFVGIYFSVYE) threads the bilayer. At 193-215 (KCKSTISSLLSKEKDQYLPIPYQ) the chain is on the mitochondrial intermembrane side. The chain crosses the membrane as a helical span at residues 216–236 (LGSGFFAGAFAAAVTCPLDVI). At 237 to 268 (KTRIQVQRSTEKQIYKGMWDSFKTILKEEGPK) the chain is on the mitochondrial matrix side. A helical transmembrane segment spans residues 269 to 289 (AFVKGMGARIWWIAPGNALTI). At 290–303 (ASYEQLKYLFKDLI) the chain is on the mitochondrial intermembrane side.

This sequence belongs to the mitochondrial carrier (TC 2.A.29) family.

The protein localises to the mitochondrion inner membrane. Mitochondrial solute carriers shuttle metabolites, nucleotides, and cofactors through the mitochondrial inner membrane. The polypeptide is Mitochondrial substrate carrier family protein E (mcfE) (Dictyostelium discoideum (Social amoeba)).